The sequence spans 284 residues: Undecaprenyl-diphosphatase (284 aa).

A run of 8 helical transmembrane segments spans residues Ile-7–Leu-27, Glu-44–His-64, Leu-90–Asp-110, Phe-116–Ile-136, Val-167–Val-187, Phe-197–Phe-217, Phe-229–Phe-249, and Phe-259–Phe-279.

The protein belongs to the UppP family.

It is found in the cell membrane. The enzyme catalyses di-trans,octa-cis-undecaprenyl diphosphate + H2O = di-trans,octa-cis-undecaprenyl phosphate + phosphate + H(+). Catalyzes the dephosphorylation of undecaprenyl diphosphate (UPP). Confers resistance to bacitracin. This is Undecaprenyl-diphosphatase from Lactococcus lactis subsp. lactis (strain IL1403) (Streptococcus lactis).